The following is a 166-amino-acid chain: Phospholipase A2 inhibitor B1 (166 aa).

A signal peptide spans 1–19 (MRLILLSGLLLLGTFLVNG). A C-type lectin domain is found at 46–161 (LFHAFLTVHK…CDDNLLVVCE (116 aa)). 2 disulfide bridges follow: cysteine 83/cysteine 160 and cysteine 138/cysteine 152. Asparagine 122 carries N-linked (GlcNAc...) asparagine glycosylation.

This sequence belongs to the alpha-type phospholipase A2 inhibitor family. In terms of assembly, homotrimer; non-covalently linked. In terms of tissue distribution, expressed by the liver.

It is found in the secreted. This phospholipase A2 inhibitor binds directly phospholipase A2 in the presence or absence of calcium. In Crotalus durissus terrificus (South American rattlesnake), this protein is Phospholipase A2 inhibitor B1.